Reading from the N-terminus, the 127-residue chain is Large ribosomal subunit protein uL24A (127 aa).

This sequence belongs to the universal ribosomal protein uL24 family. Component of the large ribosomal subunit (LSU). Mature yeast ribosomes consist of a small (40S) and a large (60S) subunit. The 40S small subunit contains 1 molecule of ribosomal RNA (18S rRNA) and 33 different proteins (encoded by 57 genes). The large 60S subunit contains 3 rRNA molecules (25S, 5.8S and 5S rRNA) and 46 different proteins (encoded by 81 genes).

It is found in the cytoplasm. In terms of biological role, component of the ribosome, a large ribonucleoprotein complex responsible for the synthesis of proteins in the cell. The small ribosomal subunit (SSU) binds messenger RNAs (mRNAs) and translates the encoded message by selecting cognate aminoacyl-transfer RNA (tRNA) molecules. The large subunit (LSU) contains the ribosomal catalytic site termed the peptidyl transferase center (PTC), which catalyzes the formation of peptide bonds, thereby polymerizing the amino acids delivered by tRNAs into a polypeptide chain. The nascent polypeptides leave the ribosome through a tunnel in the LSU and interact with protein factors that function in enzymatic processing, targeting, and the membrane insertion of nascent chains at the exit of the ribosomal tunnel. The polypeptide is Large ribosomal subunit protein uL24A (Saccharomyces cerevisiae (strain ATCC 204508 / S288c) (Baker's yeast)).